Here is a 273-residue protein sequence, read N- to C-terminus: Putative pyruvate, phosphate dikinase regulatory protein (273 aa).

149–156 contacts ADP; sequence GPSRTSKT.

Belongs to the pyruvate, phosphate/water dikinase regulatory protein family. PDRP subfamily.

The enzyme catalyses N(tele)-phospho-L-histidyl/L-threonyl-[pyruvate, phosphate dikinase] + ADP = N(tele)-phospho-L-histidyl/O-phospho-L-threonyl-[pyruvate, phosphate dikinase] + AMP + H(+). It catalyses the reaction N(tele)-phospho-L-histidyl/O-phospho-L-threonyl-[pyruvate, phosphate dikinase] + phosphate + H(+) = N(tele)-phospho-L-histidyl/L-threonyl-[pyruvate, phosphate dikinase] + diphosphate. In terms of biological role, bifunctional serine/threonine kinase and phosphorylase involved in the regulation of the pyruvate, phosphate dikinase (PPDK) by catalyzing its phosphorylation/dephosphorylation. The sequence is that of Putative pyruvate, phosphate dikinase regulatory protein from Rickettsia prowazekii (strain Madrid E).